The primary structure comprises 253 residues: Nurim homolog (253 aa).

Residues 1 to 2 are Nuclear-facing; the sequence is MT. Residues 3–30 form a helical membrane-spanning segment; it reads SIAKSIVLLASLATFAYSLYVVGSLMMF. Over 31–56 the chain is Perinuclear space; sequence LSTPRSISKAHTWIFNLLDNKSRLQT. The helical transmembrane segment at 57-78 threads the bilayer; sequence AYGPVVFDTLYLIGFIFQHSFL. The Nuclear segment spans residues 79-96; the sequence is KSAVVKKLLAKLGLSGAE. The helical transmembrane segment at 97 to 113 threads the bilayer; the sequence is RTIYSLTSSLCLHYLIV. Residues 114 to 132 lie on the Perinuclear space side of the membrane; that stretch reads NWLPAQSIVLWQIDVEQSA. Residues 133 to 161 form a helical membrane-spanning segment; it reads PLWWTFVITHGICWVVIFGGSLVMDLPEL. Over 162 to 188 the chain is Nuclear; sequence LGVKQAYYDLKAYGPPISYKSGELRNL. Residues 189 to 207 traverse the membrane as a helical segment; the sequence is YAHVRHPSFVGLSVILFAT. Residues 208 to 213 lie on the Perinuclear space side of the membrane; it reads NVMSVD. A helical transmembrane segment spans residues 214–231; the sequence is RLVMALLLTTYMYLAWST. The Nuclear portion of the chain corresponds to 232–253; sequence DQKDVAYQKIQLQRKKLELKAK.

Belongs to the nurim family.

Its subcellular location is the nucleus inner membrane. The chain is Nurim homolog (nrm) from Drosophila melanogaster (Fruit fly).